The primary structure comprises 127 residues: Small ribosomal subunit protein uS11 (127 aa).

This sequence belongs to the universal ribosomal protein uS11 family. Part of the 30S ribosomal subunit. Interacts with proteins S7 and S18. Binds to IF-3.

Located on the platform of the 30S subunit, it bridges several disparate RNA helices of the 16S rRNA. Forms part of the Shine-Dalgarno cleft in the 70S ribosome. In Chlorobaculum tepidum (strain ATCC 49652 / DSM 12025 / NBRC 103806 / TLS) (Chlorobium tepidum), this protein is Small ribosomal subunit protein uS11.